A 436-amino-acid chain; its full sequence is Adenosylmethionine-8-amino-7-oxononanoate aminotransferase (436 aa).

Tryptophan 56 serves as a coordination point for substrate. Residue 114–115 (GS) participates in pyridoxal 5'-phosphate binding. Residue tyrosine 148 participates in substrate binding. Pyridoxal 5'-phosphate is bound at residue aspartate 245. The substrate site is built by lysine 274, serine 309, and arginine 400. Lysine 274 bears the N6-(pyridoxal phosphate)lysine mark.

This sequence belongs to the class-III pyridoxal-phosphate-dependent aminotransferase family. BioA subfamily. Homodimer. Pyridoxal 5'-phosphate serves as cofactor.

It is found in the cytoplasm. It carries out the reaction (8S)-8-amino-7-oxononanoate + S-adenosyl-L-methionine = S-adenosyl-4-methylsulfanyl-2-oxobutanoate + (7R,8S)-7,8-diammoniononanoate. It functions in the pathway cofactor biosynthesis; biotin biosynthesis; 7,8-diaminononanoate from 8-amino-7-oxononanoate (SAM route): step 1/1. Functionally, catalyzes the transfer of the alpha-amino group from S-adenosyl-L-methionine (SAM) to 7-keto-8-aminopelargonic acid (KAPA) to form 7,8-diaminopelargonic acid (DAPA). It is the only aminotransferase known to utilize SAM as an amino donor. This Helicobacter pylori (strain ATCC 700392 / 26695) (Campylobacter pylori) protein is Adenosylmethionine-8-amino-7-oxononanoate aminotransferase.